A 185-amino-acid chain; its full sequence is ATP-dependent protease subunit HslV (185 aa).

T12 is an active-site residue. A168, C171, and T174 together coordinate Na(+).

It belongs to the peptidase T1B family. HslV subfamily. In terms of assembly, a double ring-shaped homohexamer of HslV is capped on each side by a ring-shaped HslU homohexamer. The assembly of the HslU/HslV complex is dependent on binding of ATP.

It is found in the cytoplasm. The enzyme catalyses ATP-dependent cleavage of peptide bonds with broad specificity.. Its activity is regulated as follows. Allosterically activated by HslU binding. In terms of biological role, protease subunit of a proteasome-like degradation complex believed to be a general protein degrading machinery. This chain is ATP-dependent protease subunit HslV, found in Cereibacter sphaeroides (strain KD131 / KCTC 12085) (Rhodobacter sphaeroides).